Consider the following 511-residue polypeptide: Maturase K (511 aa).

Belongs to the intron maturase 2 family. MatK subfamily.

The protein resides in the plastid. It localises to the chloroplast. In terms of biological role, usually encoded in the trnK tRNA gene intron. Probably assists in splicing its own and other chloroplast group II introns. This Bromus inermis (Smooth brome grass) protein is Maturase K.